The chain runs to 1481 residues: Coiled-coil domain-containing protein 88B (1481 aa).

2 coiled-coil regions span residues 200-225 (ELVAEELEMQLRSLTGMMSRLARERD) and 258-491 (SHHL…GSQH). 3 disordered regions span residues 430–458 (ELQRSLEPPPGSPGEASLPGAAPSLQDEV), 494–731 (LEEQ…AIPE), and 1331–1481 (PRRE…SLSQ). Position 441 is a phosphoserine (Ser-441). 2 stretches are compositionally biased toward polar residues: residues 542–557 (ASYSDITRSPKCSQAP) and 568–590 (QMVSQDPQTSDQALQESDPTVET). Ser-649 is modified (phosphoserine). Basic and acidic residues predominate over residues 660–695 (TLREPLKDQKALDRELELSKQQKETGRHEQRPKGLE). The stretch at 731–1308 (EEQALRDEVA…KIMDQYRVLE (578 aa)) forms a coiled coil. Phosphoserine occurs at positions 1353 and 1384. Over residues 1371–1386 (TGSSSPAPMRRVQSSL) the composition is skewed to polar residues. Residues 1453-1472 (LSEHEADDTREAFQEQKPEK) show a composition bias toward basic and acidic residues.

Belongs to the CCDC88 family. As to quaternary structure, homodimer. Interacts with DOCK8. Interacts (via C-terminus) with intact microtubules. Interacts with dynein-dynactin motor complex. Interacts (via C-terminus) with HSPA5. As to expression, abundantly expressed in immune cells, including both CD4(+) and CD8(+) T-cells and in myeloid cells (at protein level). Expressed in endothelium (at protein level). Expressed specifically in spleen, bone marrow, lymph nodes and thymus. Expressed in liver and heart.

The protein resides in the membrane. It is found in the cytoplasm. Its subcellular location is the cytoskeleton. The protein localises to the microtubule organizing center. It localises to the endoplasmic reticulum. The protein resides in the golgi apparatus. Its function is as follows. Acts as a positive regulator of T-cell maturation and inflammatory function. Required for several functions of T-cells in both the CD4(+) and the CD8(+) compartments and this includes expression of cell surface markers of activation, proliferation, and cytokine production in response to specific or non-specific stimulation and during the course of infection with the mouse malaria parasite Plasmodium berghei. Enhances NK cell cytotoxicity by positively regulating polarization of microtubule-organizing center (MTOC) to cytotoxic synapse, lytic granule transport along microtubules, and dynein-mediated clustering to MTOC. Interacts with HSPA5 and stabilizes the interaction between HSPA5 and ERN1, leading to suppression of ERN1-induced JNK activation and endoplasmic reticulum stress-induced apoptosis. The polypeptide is Coiled-coil domain-containing protein 88B (Ccdc88b) (Mus musculus (Mouse)).